Consider the following 328-residue polypeptide: DNA-directed RNA polymerase subunit alpha (328 aa).

The segment at 1–232 is alpha N-terminal domain (alpha-NTD); it reads MHNSLAELIK…QHLAILVDLK (232 aa). The segment at 246-328 is alpha C-terminal domain (alpha-CTD); the sequence is FDPLLLHPVD…PPEGLKKLNQ (83 aa).

The protein belongs to the RNA polymerase alpha chain family. As to quaternary structure, homodimer. The RNAP catalytic core consists of 2 alpha, 1 beta, 1 beta' and 1 omega subunit. When a sigma factor is associated with the core the holoenzyme is formed, which can initiate transcription.

The catalysed reaction is RNA(n) + a ribonucleoside 5'-triphosphate = RNA(n+1) + diphosphate. In terms of biological role, DNA-dependent RNA polymerase catalyzes the transcription of DNA into RNA using the four ribonucleoside triphosphates as substrates. The protein is DNA-directed RNA polymerase subunit alpha of Methylococcus capsulatus (strain ATCC 33009 / NCIMB 11132 / Bath).